Reading from the N-terminus, the 178-residue chain is Interleukin-10 (178 aa).

The N-terminal stretch at 1–18 (MPSSALLYCLILLAGVRP) is a signal peptide. 2 disulfide bridges follow: Cys30/Cys126 and Cys80/Cys132. Asn134 is a glycosylation site (N-linked (GlcNAc...) asparagine).

It belongs to the IL-10 family. In terms of assembly, homodimer. Interacts with IL10RA and IL10RB.

The protein localises to the secreted. Major immune regulatory cytokine that acts on many cells of the immune system where it has profound anti-inflammatory functions, limiting excessive tissue disruption caused by inflammation. Mechanistically, IL10 binds to its heterotetrameric receptor comprising IL10RA and IL10RB leading to JAK1 and STAT2-mediated phosphorylation of STAT3. In turn, STAT3 translocates to the nucleus where it drives expression of anti-inflammatory mediators. Targets antigen-presenting cells (APCs) such as macrophages and monocytes and inhibits their release of pro-inflammatory cytokines including granulocyte-macrophage colony-stimulating factor /GM-CSF, granulocyte colony-stimulating factor/G-CSF, IL-1 alpha, IL-1 beta, IL-6, IL-8 and TNF-alpha. Also interferes with antigen presentation by reducing the expression of MHC-class II and co-stimulatory molecules, thereby inhibiting their ability to induce T cell activation. In addition, controls the inflammatory response of macrophages by reprogramming essential metabolic pathways including mTOR signaling. This Meriones unguiculatus (Mongolian jird) protein is Interleukin-10 (IL10).